Reading from the N-terminus, the 425-residue chain is cAMP/cGMP-dependent 3',5'-cAMP/cGMP phosphodiesterase 7 (425 aa).

Residues 1-17 (MKYLILILIFFIEINNG) form the signal peptide.

The protein belongs to the cyclic nucleotide phosphodiesterase class-II family.

Its subcellular location is the secreted. The protein resides in the extracellular space. It localises to the cell surface. It catalyses the reaction 3',5'-cyclic AMP + H2O = AMP + H(+). The catalysed reaction is 3',5'-cyclic GMP + H2O = GMP + H(+). Inhibited by dithiotreitol (DTT). Functionally, phosphodiesterase with dual cAMP/cGMP specificity. However, displays a preference for cAMP over cGMP. Seems to regulate cAMP/cGMP concentration especially during cell aggregation. The chain is cAMP/cGMP-dependent 3',5'-cAMP/cGMP phosphodiesterase 7 (pde7) from Dictyostelium discoideum (Social amoeba).